We begin with the raw amino-acid sequence, 62 residues long: Photosystem II reaction center protein Z (62 aa).

The next 2 helical transmembrane spans lie at 8–28 (TLFAFVGLSFLLVVGVPVVFA) and 41–61 (FSGIGFWFLLVFAVGILNSFV).

It belongs to the PsbZ family. PSII is composed of 1 copy each of membrane proteins PsbA, PsbB, PsbC, PsbD, PsbE, PsbF, PsbH, PsbI, PsbJ, PsbK, PsbL, PsbM, PsbT, PsbY, PsbZ, Psb30/Ycf12, at least 3 peripheral proteins of the oxygen-evolving complex and a large number of cofactors. It forms dimeric complexes.

It is found in the plastid. The protein resides in the chloroplast thylakoid membrane. Its function is as follows. May control the interaction of photosystem II (PSII) cores with the light-harvesting antenna, regulates electron flow through the 2 photosystem reaction centers. PSII is a light-driven water plastoquinone oxidoreductase, using light energy to abstract electrons from H(2)O, generating a proton gradient subsequently used for ATP formation. In Tupiella akineta (Green alga), this protein is Photosystem II reaction center protein Z.